A 91-amino-acid chain; its full sequence is Mercuric transport protein periplasmic component (91 aa).

Residues 1–19 (MKKLFASLALAAVVAPVWA) form the signal peptide. The HMA domain occupies 22–88 (QTVTLSVPGM…ATADAGYPSS (67 aa)). Hg(2+) is bound by residues C33 and C36.

Belongs to the MerP family. As to quaternary structure, monomer.

Its subcellular location is the periplasm. Involved in mercury resistance. Acts as a mercury scavenger that specifically binds to a mercuric ion in the periplasm and probably passes it to the cytoplasmic mercuric reductase MerA via the mercuric transport protein MerT. This is Mercuric transport protein periplasmic component from Pseudomonas aeruginosa.